The sequence spans 298 residues: MIKQRTLKNIVCTTGIGLHTGQEVTLTLYPALANTGIIYRRIDLNPPVDFCVNIESVGSTFLCTCLKNNTYGVQVLTVEHLSAAQSGLGIDNIIIELNGPEVPIMDGSADPFVSLLLKAGIKELNSSKNFFRLKQIVRVEDGDRWAELRPFNGFTLDFTIDYDHPVVNMKNKHYFFNFTSKSFRSEISSARTFGFVDNIQKLKNCGFVLGGSLTSSVVMDKYQVVNSEGLRFNNELVRHKILDAVGDLFMCGYNLIGSFIGFKSGHTLNNKLLRAVLARRKAWEITSCIQGCDVSKIF.

Residues H80, H239, and D243 each contribute to the Zn(2+) site. Catalysis depends on H266, which acts as the Proton donor.

Belongs to the LpxC family. Zn(2+) serves as cofactor.

The catalysed reaction is a UDP-3-O-[(3R)-3-hydroxyacyl]-N-acetyl-alpha-D-glucosamine + H2O = a UDP-3-O-[(3R)-3-hydroxyacyl]-alpha-D-glucosamine + acetate. It participates in glycolipid biosynthesis; lipid IV(A) biosynthesis; lipid IV(A) from (3R)-3-hydroxytetradecanoyl-[acyl-carrier-protein] and UDP-N-acetyl-alpha-D-glucosamine: step 2/6. Functionally, catalyzes the hydrolysis of UDP-3-O-myristoyl-N-acetylglucosamine to form UDP-3-O-myristoylglucosamine and acetate, the committed step in lipid A biosynthesis. The chain is UDP-3-O-acyl-N-acetylglucosamine deacetylase from Blochmanniella floridana.